The sequence spans 149 residues: D-aminoacyl-tRNA deacylase (149 aa).

A Gly-cisPro motif, important for rejection of L-amino acids motif is present at residues Gly137–Pro138.

The protein belongs to the DTD family. As to quaternary structure, homodimer.

It is found in the cytoplasm. The catalysed reaction is glycyl-tRNA(Ala) + H2O = tRNA(Ala) + glycine + H(+). It carries out the reaction a D-aminoacyl-tRNA + H2O = a tRNA + a D-alpha-amino acid + H(+). Its function is as follows. An aminoacyl-tRNA editing enzyme that deacylates mischarged D-aminoacyl-tRNAs. Also deacylates mischarged glycyl-tRNA(Ala), protecting cells against glycine mischarging by AlaRS. Acts via tRNA-based rather than protein-based catalysis; rejects L-amino acids rather than detecting D-amino acids in the active site. By recycling D-aminoacyl-tRNA to D-amino acids and free tRNA molecules, this enzyme counteracts the toxicity associated with the formation of D-aminoacyl-tRNA entities in vivo and helps enforce protein L-homochirality. This Clostridium botulinum (strain 657 / Type Ba4) protein is D-aminoacyl-tRNA deacylase.